A 624-amino-acid chain; its full sequence is Basal cell adhesion molecule (624 aa).

The N-terminal stretch at 1 to 25 (MEPPDARAGLLWLTLLLSGYSGAQA) is a signal peptide. Ig-like V-type domains lie at 26-136 (ELHV…SSVR) and 141-251 (PEAT…HTFR). Over 26–543 (ELHVSVPPRV…GSVAPQTAQA (518 aa)) the chain is Extracellular. 3 disulfides stabilise this stretch: Cys47–Cys119, Cys166–Cys231, and Cys285–Cys331. Ig-like C2-type domains lie at 268–343 (PSTT…EEVQ), 357–436 (PLEL…QSFQ), and 443–534 (PELK…FHFG). N-linked (GlcNAc...) asparagine glycans are attached at residues Asn315, Asn371, and Asn378. 2 disulfide bridges follow: Cys379-Cys419 and Cys468-Cys518. The interval 477–497 (KLTWSQRGDTTPAEPPFEGRG) is disordered. Residues 544 to 564 (GVAVMAVAVSVGLLLLVVAAF) traverse the membrane as a helical segment. Topologically, residues 565–624 (YCMRRKGRPGCCQRAEKGAPPAREPELSHSGSERPEHTGLLMGGPSGGGRGGNGGFGDEC) are cytoplasmic. Residues 574–624 (GCCQRAEKGAPPAREPELSHSGSERPEHTGLLMGGPSGGGRGGNGGFGDEC) form a disordered region. A compositionally biased stretch (basic and acidic residues) spans 587 to 601 (REPELSHSGSERPEH). Residues Ser592, Ser594, and Ser596 each carry the phosphoserine modification. Gly residues predominate over residues 605–624 (LMGGPSGGGRGGNGGFGDEC).

Homodimer. Interacts with ITGA4:ITGB1. Interacts with spectrins SPTA1 and SPTB1.

It is found in the cell membrane. Its function is as follows. Transmembrane glycoprotein that functions as both a receptor and an adhesion molecule playing a crucial role in cell adhesion, motility, migration and invasion. Extracellular domain enables binding to extracellular matrix proteins, such as laminin, integrin and other ligands while its intracellular domain interacts with cytoskeletal proteins like hemoglobin, facilitating cell signal transduction. Serves as a receptor for laminin alpha-5/LAMA5 to promote cell adhesion. Mechanistically, JAK2 induces BCAM phosphorylation and activates its adhesion to laminin by stimulating a Rap1/AKT signaling pathway in the absence of EPOR. This chain is Basal cell adhesion molecule (Bcam), found in Rattus norvegicus (Rat).